Consider the following 536-residue polypeptide: Pre-mRNA-splicing factor SLU7 (536 aa).

Positions Glu-22–Pro-42 are disordered. Residues Gly-94–Glu-111 form a CCHC-type zinc finger. The segment at Lys-178 to Gly-201 is disordered. The span at Lys-182–Asp-200 shows a compositional bias: acidic residues.

Belongs to the SLU7 family.

The protein localises to the nucleus. Participates in the second catalytic step of pre-mRNA splicing, when the free hydroxyl group of exon I attacks the 3'-splice site to generate spliced mRNA and the excised lariat intron. The polypeptide is Pre-mRNA-splicing factor SLU7 (Oryza sativa subsp. indica (Rice)).